Reading from the N-terminus, the 129-residue chain is uncharacterized protein (129 aa).

The signal sequence occupies residues 1-21; it reads MAQNKTIAVALLLATLVAVMG.

This is an uncharacterized protein from Oryza sativa subsp. japonica (Rice).